Consider the following 214-residue polypeptide: NAD(P)H-quinone oxidoreductase subunit 5, chloroplastic (214 aa).

Transmembrane regions (helical) follow at residues 84–104 (LFPL…GIPF) and 152–172 (SLAI…YSFF).

Belongs to the complex I subunit 5 family. In terms of assembly, NDH is composed of at least 16 different subunits, 5 of which are encoded in the nucleus.

It localises to the plastid. The protein localises to the chloroplast thylakoid membrane. It catalyses the reaction a plastoquinone + NADH + (n+1) H(+)(in) = a plastoquinol + NAD(+) + n H(+)(out). The enzyme catalyses a plastoquinone + NADPH + (n+1) H(+)(in) = a plastoquinol + NADP(+) + n H(+)(out). Its function is as follows. NDH shuttles electrons from NAD(P)H:plastoquinone, via FMN and iron-sulfur (Fe-S) centers, to quinones in the photosynthetic chain and possibly in a chloroplast respiratory chain. The immediate electron acceptor for the enzyme in this species is believed to be plastoquinone. Couples the redox reaction to proton translocation, and thus conserves the redox energy in a proton gradient. The sequence is that of NAD(P)H-quinone oxidoreductase subunit 5, chloroplastic (ndhF) from Brachypodium pinnatum (Tor grass).